We begin with the raw amino-acid sequence, 321 residues long: uncharacterized protein (321 aa).

Positions 1 to 22 are cleaved as a signal peptide; that stretch reads MKSIYKYTFMLFVFLFGTLMMA.

Belongs to the bacterial solute-binding protein 1 family. WtpA subfamily.

This is an uncharacterized protein from Petrotoga mobilis (strain DSM 10674 / SJ95).